Here is an 89-residue protein sequence, read N- to C-terminus: Small ribosomal subunit protein uS15 (89 aa).

This sequence belongs to the universal ribosomal protein uS15 family. In terms of assembly, part of the 30S ribosomal subunit. Forms a bridge to the 50S subunit in the 70S ribosome, contacting the 23S rRNA.

Functionally, one of the primary rRNA binding proteins, it binds directly to 16S rRNA where it helps nucleate assembly of the platform of the 30S subunit by binding and bridging several RNA helices of the 16S rRNA. Forms an intersubunit bridge (bridge B4) with the 23S rRNA of the 50S subunit in the ribosome. The polypeptide is Small ribosomal subunit protein uS15 (Synechococcus elongatus (strain ATCC 33912 / PCC 7942 / FACHB-805) (Anacystis nidulans R2)).